A 245-amino-acid chain; its full sequence is Geranylgeranylglyceryl phosphate synthase (245 aa).

Positions 20 and 50 each coordinate Mg(2+). Sn-glycerol 1-phosphate is bound by residues 169 to 175, 202 to 203, and 224 to 225; these read YLEAGSG, GG, and GT.

Belongs to the GGGP/HepGP synthase family. Group II subfamily. It depends on Mg(2+) as a cofactor.

It is found in the cytoplasm. It carries out the reaction sn-glycerol 1-phosphate + (2E,6E,10E)-geranylgeranyl diphosphate = sn-3-O-(geranylgeranyl)glycerol 1-phosphate + diphosphate. The protein operates within membrane lipid metabolism; glycerophospholipid metabolism. Its function is as follows. Prenyltransferase that catalyzes the transfer of the geranylgeranyl moiety of geranylgeranyl diphosphate (GGPP) to the C3 hydroxyl of sn-glycerol-1-phosphate (G1P). This reaction is the first ether-bond-formation step in the biosynthesis of archaeal membrane lipids. The chain is Geranylgeranylglyceryl phosphate synthase from Ignicoccus hospitalis (strain KIN4/I / DSM 18386 / JCM 14125).